An 804-amino-acid polypeptide reads, in one-letter code: Enhancer of polycomb homolog 2 (804 aa).

Disordered regions lie at residues 372-395, 484-508, 603-624, and 646-669; these read QSSD…ENDP, GFSS…DRHC, QSQQ…SDCM, and PVRS…VQPS. Polar residues-rich tracts occupy residues 611-624 and 654-669; these read SHPK…SDCM and DQNA…VQPS.

It belongs to the enhancer of polycomb family.

It localises to the nucleus. Its function is as follows. May play a role in transcription or DNA repair. The chain is Enhancer of polycomb homolog 2 (epc2) from Xenopus laevis (African clawed frog).